A 66-amino-acid polypeptide reads, in one-letter code: Large ribosomal subunit protein bL35 (66 aa).

2 stretches are compositionally biased toward basic residues: residues 1–16 (MPKQKTHRASAKRFKR) and 31–45 (HRFHGKTKKQRRQLR). A disordered region spans residues 1–52 (MPKQKTHRASAKRFKRTGNGGLKRSNAYTSHRFHGKTKKQRRQLRKASMVSA).

This sequence belongs to the bacterial ribosomal protein bL35 family.

This is Large ribosomal subunit protein bL35 from Ligilactobacillus salivarius (strain UCC118) (Lactobacillus salivarius).